The chain runs to 326 residues: Vitamin B12 import system permease protein BtuC (326 aa).

9 helical membrane passes run 19 to 39, 61 to 81, 88 to 108, 112 to 132, 146 to 166, 184 to 204, 240 to 260, 274 to 294, and 302 to 322; these read LSVL…LWIL, LAVL…QALF, PGLL…VLLG, LPNW…TLIL, LLAG…AIYF, GGVD…LLWI, GWMV…GLVI, VLLP…DIVA, and ELPI…WLLL.

Belongs to the binding-protein-dependent transport system permease family. FecCD subfamily. The complex is composed of two ATP-binding proteins (BtuD), two transmembrane proteins (BtuC) and a solute-binding protein (BtuF).

The protein resides in the cell inner membrane. Functionally, part of the ABC transporter complex BtuCDF involved in vitamin B12 import. Involved in the translocation of the substrate across the membrane. The sequence is that of Vitamin B12 import system permease protein BtuC from Escherichia coli O6:K15:H31 (strain 536 / UPEC).